Here is a 365-residue protein sequence, read N- to C-terminus: 3-dehydroquinate synthase (365 aa).

NAD(+) is bound by residues D69–K74, G103–D107, T127–T128, K140, K149, and T167–T170. Zn(2+)-binding residues include E182, H245, and H262.

The protein belongs to the sugar phosphate cyclases superfamily. Dehydroquinate synthase family. It depends on Co(2+) as a cofactor. Zn(2+) is required as a cofactor. The cofactor is NAD(+).

The protein localises to the cytoplasm. The catalysed reaction is 7-phospho-2-dehydro-3-deoxy-D-arabino-heptonate = 3-dehydroquinate + phosphate. It functions in the pathway metabolic intermediate biosynthesis; chorismate biosynthesis; chorismate from D-erythrose 4-phosphate and phosphoenolpyruvate: step 2/7. In terms of biological role, catalyzes the conversion of 3-deoxy-D-arabino-heptulosonate 7-phosphate (DAHP) to dehydroquinate (DHQ). This chain is 3-dehydroquinate synthase, found in Pseudomonas putida (strain W619).